The chain runs to 225 residues: PKHD-type hydroxylase YbiX (225 aa).

The Fe2OG dioxygenase domain maps to 78–177 (TLSTPLFNRY…RVASFMWIQS (100 aa)). The Fe cation site is built by histidine 96, aspartate 98, and histidine 158. Arginine 168 contributes to the 2-oxoglutarate binding site.

The cofactor is Fe(2+). It depends on L-ascorbate as a cofactor.

The polypeptide is PKHD-type hydroxylase YbiX (Escherichia coli O7:K1 (strain IAI39 / ExPEC)).